Reading from the N-terminus, the 447-residue chain is Nacrein (447 aa).

Residues 1 to 17 (MYLHLTALCVVIPLCYG) form the signal peptide. Asn-44 is a glycosylation site (N-linked (GlcNAc...) asparagine). The Alpha-carbonic anhydrase domain maps to 50–446 (AGFSYDRSIC…KNKVTVYKSF (397 aa)). The Zn(2+) site is built by His-149, His-151, and His-174. Residues 218–329 (DEPDDEECKH…GENGHKHGCR (112 aa)) are disordered. A compositionally biased stretch (basic and acidic residues) spans 224–236 (ECKHILKGHHPDN). Low complexity predominate over residues 237 to 321 (NENGNGDNGN…NNGENGNNGE (85 aa)). A run of 27 repeats spans residues 242–244 (GDN), 245–247 (GNN), 248–250 (GYN), 251–253 (GDN), 254–256 (GNN), 257–259 (GDN), 260–262 (GNN), 263–265 (SYN), 266–268 (GDN), 269–271 (GNN), 272–274 (GVN), 275–277 (GNN), 278–280 (GYN), 281–283 (GDN), 284–286 (GNN), 287–289 (GDN), 290–292 (GNN), 293–295 (GYN), 296–298 (GDN), 299–301 (GNN), 302–304 (GDN), 305–307 (GNN), 308–310 (GEN), 311–313 (GNN), 314–316 (GEN), 317–318 (GN), and 320–322 (GEN). Residues 242–322 (GDNGNNGYNG…NGENGNNGEN (81 aa)) form a 27 X 3 AA approximate tandem repeats of G-X-N region. An N-linked (GlcNAc...) asparagine glycan is attached at Asn-261. 387–388 (TT) is a substrate binding site.

This sequence belongs to the alpha-carbonic anhydrase family. Homooligomer; disulfide-linked. May also be disulfide-linked to insoluble organic matrix. Zn(2+) serves as cofactor. N-glycosylated. Expressed at whole regions of the mantle epithelium tissue. Is found in the aragonitic nacreous and calcitic prismatic and foliated layers.

The protein resides in the secreted. It localises to the extracellular space. The protein localises to the extracellular matrix. It catalyses the reaction hydrogencarbonate + H(+) = CO2 + H2O. Its function is as follows. Acts as a negative regulator for calcification in the shells of mollusks. May function both as a calcium concentrator and as a carbonic anhydrase required for production of carbonate ions, which are assembled to CaCO(3) at mineralization sites. Is important for shell formation in both the calcitic prismatic layer and the aragonitic nacreous layer. The protein is Nacrein of Pinctada fucata (Akoya pearl oyster).